The chain runs to 194 residues: Surfactant protein C (194 aa).

The interval 1 to 21 is disordered; sequence MDMGSKEVLMESPPDYSTGPR. Positions 1–23 are excised as a propeptide; it reads MDMGSKEVLMESPPDYSTGPRSQ. Residues C28 and C29 are each lipidated (S-palmitoyl cysteine). Residues 59-194 constitute a propeptide that is removed on maturation; sequence HMSQKHTEMV…LCGELPLYYI (136 aa). Residues 95–194 form the BRICHOS domain; it reads FSIGSTGIVL…LCGELPLYYI (100 aa). C122 and C186 are oxidised to a cystine. The interval 149-170 is disordered; it reads SSTPTSKLGQEEGHSAGSDSDS.

The protein resides in the secreted. Its subcellular location is the extracellular space. It localises to the surface film. In terms of biological role, pulmonary surfactant associated proteins promote alveolar stability by lowering the surface tension at the air-liquid interface in the peripheral air spaces. This chain is Surfactant protein C, found in Rattus norvegicus (Rat).